A 370-amino-acid chain; its full sequence is DNA replication and repair protein RecF (370 aa).

30–37 (GENAQGKT) serves as a coordination point for ATP.

This sequence belongs to the RecF family.

It localises to the cytoplasm. The RecF protein is involved in DNA metabolism; it is required for DNA replication and normal SOS inducibility. RecF binds preferentially to single-stranded, linear DNA. It also seems to bind ATP. The sequence is that of DNA replication and repair protein RecF from Listeria innocua serovar 6a (strain ATCC BAA-680 / CLIP 11262).